We begin with the raw amino-acid sequence, 553 residues long: Probable inactive serine/threonine-protein kinase samkD (553 aa).

The SAM domain maps to 24 to 90; sequence WDNETVCKWL…FEYQILKNCY (67 aa). In terms of domain architecture, Protein kinase spans 134–393; sequence YQYIETISKN…SKELLKSFWF (260 aa). Residues 140-148 and Lys165 contribute to the ATP site; that span reads ISKNKFCEI.

This sequence belongs to the protein kinase superfamily. Ser/Thr protein kinase family.

The polypeptide is Probable inactive serine/threonine-protein kinase samkD (samkD) (Dictyostelium discoideum (Social amoeba)).